The following is a 393-amino-acid chain: MTTMGTPLTPNATKVMMLGSGELGKEVVIELQRLGVEVIAVDRYANAPAQQVAHRAYTISMLDDDALRAVVEQEKPDFIVPEVEAIATETLVELEQKGYQVVPTAKATQLTMNREGIRRLAAEELGLPTSPYRFVDNFADFQQAVLAVGVPCVVKPIMSSSGHGQSIIKSLDQIQQAWDYSQAGGRAGGGRVIVEGFIKFDYEITLLTVRHINGTSFLAPIGHRQQNGDYRESWQPQAMSEVALQKAQQIAERITTALGGRGIFGVELFVCGDDIIFNEVSPRPHDTGMVTMASQELSQFALHARAILGLPIPHIEQFGPAASKAIVVEGKSNNVMFVGLDKVLEERGTHIRLFGKAEVNGHRRLGVILARDESTDKALAKVERAYANLTVKL.

Residues 22–23 (EL) and glutamate 82 contribute to the N(1)-(5-phospho-beta-D-ribosyl)glycinamide site. ATP is bound by residues arginine 114, lysine 155, 160–165 (SSGHGQ), 195–198 (EGFI), and glutamate 203. In terms of domain architecture, ATP-grasp spans 119-308 (RLAAEELGLP…QFALHARAIL (190 aa)). Positions 267 and 279 each coordinate Mg(2+). Residues aspartate 286, lysine 356, and 363 to 364 (RR) each bind N(1)-(5-phospho-beta-D-ribosyl)glycinamide.

The protein belongs to the PurK/PurT family. Homodimer.

It carries out the reaction N(1)-(5-phospho-beta-D-ribosyl)glycinamide + formate + ATP = N(2)-formyl-N(1)-(5-phospho-beta-D-ribosyl)glycinamide + ADP + phosphate + H(+). It participates in purine metabolism; IMP biosynthesis via de novo pathway; N(2)-formyl-N(1)-(5-phospho-D-ribosyl)glycinamide from N(1)-(5-phospho-D-ribosyl)glycinamide (formate route): step 1/1. Functionally, involved in the de novo purine biosynthesis. Catalyzes the transfer of formate to 5-phospho-ribosyl-glycinamide (GAR), producing 5-phospho-ribosyl-N-formylglycinamide (FGAR). Formate is provided by PurU via hydrolysis of 10-formyl-tetrahydrofolate. The chain is Formate-dependent phosphoribosylglycinamide formyltransferase from Haemophilus ducreyi (strain 35000HP / ATCC 700724).